The sequence spans 80 residues: Exodeoxyribonuclease 7 small subunit (80 aa).

Belongs to the XseB family. Heterooligomer composed of large and small subunits.

The protein resides in the cytoplasm. It carries out the reaction Exonucleolytic cleavage in either 5'- to 3'- or 3'- to 5'-direction to yield nucleoside 5'-phosphates.. Bidirectionally degrades single-stranded DNA into large acid-insoluble oligonucleotides, which are then degraded further into small acid-soluble oligonucleotides. The polypeptide is Exodeoxyribonuclease 7 small subunit (Salmonella paratyphi B (strain ATCC BAA-1250 / SPB7)).